A 419-amino-acid chain; its full sequence is UDP-N-acetylglucosamine 1-carboxyvinyltransferase (419 aa).

Position 22-23 (22-23 (KN)) interacts with phosphoenolpyruvate. Arginine 91 is a binding site for UDP-N-acetyl-alpha-D-glucosamine. Cysteine 115 (proton donor) is an active-site residue. Cysteine 115 bears the 2-(S-cysteinyl)pyruvic acid O-phosphothioketal mark. UDP-N-acetyl-alpha-D-glucosamine is bound by residues 120–124 (RPVDL), 160–163 (KVSV), aspartate 305, and valine 327.

The protein belongs to the EPSP synthase family. MurA subfamily.

The protein resides in the cytoplasm. It catalyses the reaction phosphoenolpyruvate + UDP-N-acetyl-alpha-D-glucosamine = UDP-N-acetyl-3-O-(1-carboxyvinyl)-alpha-D-glucosamine + phosphate. Its pathway is cell wall biogenesis; peptidoglycan biosynthesis. Its function is as follows. Cell wall formation. Adds enolpyruvyl to UDP-N-acetylglucosamine. This Salmonella gallinarum (strain 287/91 / NCTC 13346) protein is UDP-N-acetylglucosamine 1-carboxyvinyltransferase.